A 127-amino-acid polypeptide reads, in one-letter code: Large ribosomal subunit protein uL22 (127 aa).

Part of the 50S ribosomal subunit.

This protein binds specifically to 23S rRNA; its binding is stimulated by other ribosomal proteins, e.g. L4, L17, and L20. It is important during the early stages of 50S assembly. It makes multiple contacts with different domains of the 23S rRNA in the assembled 50S subunit and ribosome. Its function is as follows. The globular domain of the protein is located near the polypeptide exit tunnel on the outside of the subunit, while an extended beta-hairpin is found that lines the wall of the exit tunnel in the center of the 70S ribosome. This chain is Large ribosomal subunit protein uL22, found in Rhodopseudomonas palustris (strain ATCC BAA-98 / CGA009).